A 338-amino-acid chain; its full sequence is UbiA prenyltransferase domain-containing protein 1 (338 aa).

A disordered region spans residues 1-39 (MAAVQAPGEKINIQAGETTQVGDTDQQRNDWPEEDRLPE). Position 2 is an N-acetylalanine (A2). Positions 15 to 24 (AGETTQVGDT) are enriched in polar residues. Positions 25–39 (DQQRNDWPEEDRLPE) are enriched in basic and acidic residues. 8 consecutive transmembrane segments (helical) span residues 83-103 (LLLG…LVNT), 134-154 (FGVF…YLST), 160-180 (LALI…GIGF), 188-208 (LVIL…VQVG), 209-229 (SLAI…EAIL), 245-267 (IVTL…LLFL), 277-297 (THCS…FSLE), and 315-335 (LNLL…AGSL).

This sequence belongs to the UbiA prenyltransferase family. Interacts with HMGCR and SOAT1.

It is found in the endoplasmic reticulum membrane. The protein localises to the golgi apparatus membrane. It localises to the mitochondrion membrane. The enzyme catalyses menadiol + (2E,6E,10E)-geranylgeranyl diphosphate = menaquinol-4 + diphosphate. It catalyses the reaction all-trans-decaprenyl diphosphate + 4-hydroxybenzoate = 4-hydroxy-3-(all-trans-decaprenyl)benzoate + diphosphate. It participates in quinol/quinone metabolism; menaquinone biosynthesis. The protein operates within cofactor biosynthesis; ubiquinone biosynthesis. Its function is as follows. Prenyltransferase that mediates the formation of menaquinone-4 (MK-4) and coenzyme Q10. MK-4 is a vitamin K2 isoform required for endothelial cell development. Mediates the conversion of phylloquinone (PK) into MK-4, probably by cleaving the side chain of phylloquinone (PK) to release 2-methyl-1,4-naphthoquinone (menadione; K3) and then prenylating it with geranylgeranyl pyrophosphate (GGPP) to form MK-4. Also plays a role in cardiovascular development independently of MK-4 biosynthesis, by acting as a coenzyme Q10 biosynthetic enzyme: coenzyme Q10, also named ubiquinone, plays an important antioxidant role in the cardiovascular system. Mediates biosynthesis of coenzyme Q10 in the Golgi membrane, leading to protect cardiovascular tissues from NOS3/eNOS-dependent oxidative stress. The sequence is that of UbiA prenyltransferase domain-containing protein 1 (Ubiad1) from Rattus norvegicus (Rat).